The primary structure comprises 116 residues: UPF0134 protein MPN_038 (116 aa).

The protein belongs to the UPF0134 family.

The polypeptide is UPF0134 protein MPN_038 (Mycoplasma pneumoniae (strain ATCC 29342 / M129 / Subtype 1) (Mycoplasmoides pneumoniae)).